The sequence spans 816 residues: Acyl-homoserine lactone acylase QuiP (816 aa).

An N-terminal signal peptide occupies residues Met1–Ala33. Ser262 serves as the catalytic Nucleophile.

The protein belongs to the peptidase S45 family. Heterodimer of an alpha subunit and a beta subunit processed from the same precursor.

It is found in the periplasm. It catalyses the reaction an N-acyl-L-homoserine lactone + H2O = L-homoserine lactone + a carboxylate. Its function is as follows. Catalyzes the deacylation of acyl-homoserine lactone (AHL or acyl-HSL), releasing homoserine lactone (HSL) and the corresponding fatty acid. Possesses a specificity for the degradation of long-chain acyl-HSLs (side chains of seven or more carbons in length). In Pseudomonas fluorescens (strain Pf0-1), this protein is Acyl-homoserine lactone acylase QuiP (quiP).